Here is a 129-residue protein sequence, read N- to C-terminus: DNA-directed RNA polymerase subunit omega (129 aa).

Residues 76 to 101 (EVDEPEPDPVTLAASAADGEDDDQPE) form a disordered region.

Belongs to the RNA polymerase subunit omega family. In terms of assembly, the RNAP catalytic core consists of 2 alpha, 1 beta, 1 beta' and 1 omega subunit. When a sigma factor is associated with the core the holoenzyme is formed, which can initiate transcription.

The enzyme catalyses RNA(n) + a ribonucleoside 5'-triphosphate = RNA(n+1) + diphosphate. Promotes RNA polymerase assembly. Latches the N- and C-terminal regions of the beta' subunit thereby facilitating its interaction with the beta and alpha subunits. In Agrobacterium fabrum (strain C58 / ATCC 33970) (Agrobacterium tumefaciens (strain C58)), this protein is DNA-directed RNA polymerase subunit omega.